The chain runs to 214 residues: Putative ankyrin repeat protein R844 (214 aa).

5 ANK repeats span residues 41 to 70 (VEKN…QNKF), 81 to 110 (SLDK…NVKT), 111 to 140 (DNNM…DVRA), 142 to 170 (NDCA…DVTS), and 172 to 200 (NNFA…DIRA).

The protein is Putative ankyrin repeat protein R844 of Acanthamoeba polyphaga mimivirus (APMV).